Consider the following 419-residue polypeptide: DNA polymerase IV (419 aa).

The 182-residue stretch at 12 to 193 (IFHIDMNCFY…MSVEEMYGIG (182 aa)) folds into the UmuC domain. Aspartate 16 and aspartate 112 together coordinate Mg(2+). Residue glutamate 113 is part of the active site. The disordered stretch occupies residues 388-419 (IITSQKNKNESQENQQPRTSFQKDFLDDYKKP).

The protein belongs to the DNA polymerase type-Y family. In terms of assembly, monomer. It depends on Mg(2+) as a cofactor.

It is found in the cytoplasm. The catalysed reaction is DNA(n) + a 2'-deoxyribonucleoside 5'-triphosphate = DNA(n+1) + diphosphate. Functionally, poorly processive, error-prone DNA polymerase involved in untargeted mutagenesis. Copies undamaged DNA at stalled replication forks, which arise in vivo from mismatched or misaligned primer ends. These misaligned primers can be extended by PolIV. Exhibits no 3'-5' exonuclease (proofreading) activity. May be involved in translesional synthesis, in conjunction with the beta clamp from PolIII. The polypeptide is DNA polymerase IV (Oceanobacillus iheyensis (strain DSM 14371 / CIP 107618 / JCM 11309 / KCTC 3954 / HTE831)).